The following is a 393-amino-acid chain: MITYEKKYLMDTYNRYPIMLVKGEGTRVWDSEGNAYLDFVAGIAVNSLGHCHPALVEAIKKQAETLIHCSNLYWNEKQIELARMISENSFGGKVFFANSGAEANEGAIKLARKYASLKYGGKRYKIITAKNSFHGRTFGALTATGQEKYHKGFGPLLAGFKYVPLNDIEALYEAVDDEVCAIMLEVIQGEGGIHEATPEYVKAVRKICDENDLLFILDEVQTGIGRTGKLFGYEHYGVVPDIMTLAKGLGGGFPIGAIVAKEDKAVFKPGDHASTFGGNPLACAAGIAVLNEVTKDGFLEGVDKKGKYFREGLETLQKKHKVVKEIRGKGLMVGCEVDLEDASEIVLKALEKGLLINSVSHNVLRFVPPLIVTEEEIDEALQILDDVLSEIRF.

Residues 100–101 (GA) and phenylalanine 133 each bind pyridoxal 5'-phosphate. Arginine 136 is a binding site for N(2)-acetyl-L-ornithine. Pyridoxal 5'-phosphate is bound at residue 218 to 221 (DEVQ). An N6-(pyridoxal phosphate)lysine modification is found at lysine 247. Serine 274 contacts N(2)-acetyl-L-ornithine. Threonine 275 contributes to the pyridoxal 5'-phosphate binding site.

This sequence belongs to the class-III pyridoxal-phosphate-dependent aminotransferase family. ArgD subfamily. In terms of assembly, homodimer. The cofactor is pyridoxal 5'-phosphate.

It localises to the cytoplasm. It catalyses the reaction N(2)-acetyl-L-ornithine + 2-oxoglutarate = N-acetyl-L-glutamate 5-semialdehyde + L-glutamate. Its pathway is amino-acid biosynthesis; L-arginine biosynthesis; N(2)-acetyl-L-ornithine from L-glutamate: step 4/4. The sequence is that of Acetylornithine aminotransferase from Caldanaerobacter subterraneus subsp. tengcongensis (strain DSM 15242 / JCM 11007 / NBRC 100824 / MB4) (Thermoanaerobacter tengcongensis).